The following is a 119-amino-acid chain: NADH-quinone oxidoreductase subunit A (119 aa).

The next 3 membrane-spanning stretches (helical) occupy residues 9-29 (VLLF…LGYV), 63-83 (LVAI…PWAV), and 88-108 (VGMT…VGFA).

Belongs to the complex I subunit 3 family. As to quaternary structure, NDH-1 is composed of 14 different subunits. Subunits NuoA, H, J, K, L, M, N constitute the membrane sector of the complex.

It is found in the cell inner membrane. The catalysed reaction is a quinone + NADH + 5 H(+)(in) = a quinol + NAD(+) + 4 H(+)(out). Its function is as follows. NDH-1 shuttles electrons from NADH, via FMN and iron-sulfur (Fe-S) centers, to quinones in the respiratory chain. The immediate electron acceptor for the enzyme in this species is believed to be ubiquinone. Couples the redox reaction to proton translocation (for every two electrons transferred, four hydrogen ions are translocated across the cytoplasmic membrane), and thus conserves the redox energy in a proton gradient. The protein is NADH-quinone oxidoreductase subunit A of Paracidovorax citrulli (strain AAC00-1) (Acidovorax citrulli).